Consider the following 489-residue polypeptide: Membrane-bound lytic murein transglycosylase F (489 aa).

The N-terminal stretch at 1–32 is a signal peptide; sequence MFALTAYRLRCAAWLLATGIFLLLAGCSEAKA. A non-LT domain region spans residues 33–268; the sequence is PTALERVQKE…RLKDRYYGHV (236 aa). The tract at residues 269–489 is LT domain; that stretch reads DVLGYVGAYT…PEEDSGDEKL (221 aa). Glutamate 315 is an active-site residue. Residues 466–489 are disordered; it reads AESGLHLPGVNKTRPEEDSGDEKL. Over residues 478-489 the composition is skewed to basic and acidic residues; that stretch reads TRPEEDSGDEKL.

It in the N-terminal section; belongs to the bacterial solute-binding protein 3 family. In the C-terminal section; belongs to the transglycosylase Slt family.

It is found in the cell outer membrane. It catalyses the reaction Exolytic cleavage of the (1-&gt;4)-beta-glycosidic linkage between N-acetylmuramic acid (MurNAc) and N-acetylglucosamine (GlcNAc) residues in peptidoglycan, from either the reducing or the non-reducing ends of the peptidoglycan chains, with concomitant formation of a 1,6-anhydrobond in the MurNAc residue.. Functionally, murein-degrading enzyme that degrades murein glycan strands and insoluble, high-molecular weight murein sacculi, with the concomitant formation of a 1,6-anhydromuramoyl product. Lytic transglycosylases (LTs) play an integral role in the metabolism of the peptidoglycan (PG) sacculus. Their lytic action creates space within the PG sacculus to allow for its expansion as well as for the insertion of various structures such as secretion systems and flagella. This chain is Membrane-bound lytic murein transglycosylase F, found in Pseudomonas aeruginosa (strain UCBPP-PA14).